A 246-amino-acid chain; its full sequence is Triosephosphate isomerase (246 aa).

9-11 is a binding site for substrate; it reads NWK. The active-site Electrophile is H95. The active-site Proton acceptor is the E165. Residues G171, S210, and 231-232 contribute to the substrate site; that span reads GG.

This sequence belongs to the triosephosphate isomerase family. Homodimer.

The protein resides in the cytoplasm. It catalyses the reaction D-glyceraldehyde 3-phosphate = dihydroxyacetone phosphate. It functions in the pathway carbohydrate biosynthesis; gluconeogenesis. The protein operates within carbohydrate degradation; glycolysis; D-glyceraldehyde 3-phosphate from glycerone phosphate: step 1/1. Its function is as follows. Involved in the gluconeogenesis. Catalyzes stereospecifically the conversion of dihydroxyacetone phosphate (DHAP) to D-glyceraldehyde-3-phosphate (G3P). This chain is Triosephosphate isomerase, found in Thermodesulfovibrio yellowstonii (strain ATCC 51303 / DSM 11347 / YP87).